The chain runs to 406 residues: Tubby-like F-box protein 3 (406 aa).

In terms of domain architecture, F-box spans 50 to 105 (SCWASMPPELLRDVLMRIEQSEDTWPSRKNVVSCAGVCRNWREIVKEIVRVPELSS).

The protein belongs to the TUB family. Ubiquitous at low levels. Not detected in mature siliques.

It localises to the cell membrane. Its subcellular location is the plastid. The protein localises to the nucleus. It is found in the nucleoplasm. The protein resides in the cytoplasm. Functionally, involved in abiotic stress signaling. Tethered to plasma membrane (PM) and probably bound to phosphatidylinositol 4,5-bisphosphate. Abiotic stresses (drought, salt, H(2)O(2)) trigger phospholipase C mediated PM dislogement and plastidial and nucleocytosolic relocation of TULP3. The chain is Tubby-like F-box protein 3 from Arabidopsis thaliana (Mouse-ear cress).